We begin with the raw amino-acid sequence, 452 residues long: Phosphoglucosamine mutase (452 aa).

The active-site Phosphoserine intermediate is the S103. The Mg(2+) site is built by S103, D243, D245, and D247. S103 bears the Phosphoserine mark.

It belongs to the phosphohexose mutase family. It depends on Mg(2+) as a cofactor. Activated by phosphorylation.

It carries out the reaction alpha-D-glucosamine 1-phosphate = D-glucosamine 6-phosphate. Catalyzes the conversion of glucosamine-6-phosphate to glucosamine-1-phosphate. This chain is Phosphoglucosamine mutase, found in Limosilactobacillus fermentum (strain NBRC 3956 / LMG 18251) (Lactobacillus fermentum).